Consider the following 234-residue polypeptide: Phosphoribosylformylglycinamidine synthase subunit PurQ (234 aa).

Residues 3–231 (AAVVVFPGSN…ALYLERRKDH (229 aa)) enclose the Glutamine amidotransferase type-1 domain. Cys-87 functions as the Nucleophile in the catalytic mechanism. Catalysis depends on residues His-200 and Glu-202.

In terms of assembly, part of the FGAM synthase complex composed of 1 PurL, 1 PurQ and 2 PurS subunits.

Its subcellular location is the cytoplasm. The catalysed reaction is N(2)-formyl-N(1)-(5-phospho-beta-D-ribosyl)glycinamide + L-glutamine + ATP + H2O = 2-formamido-N(1)-(5-O-phospho-beta-D-ribosyl)acetamidine + L-glutamate + ADP + phosphate + H(+). It carries out the reaction L-glutamine + H2O = L-glutamate + NH4(+). The protein operates within purine metabolism; IMP biosynthesis via de novo pathway; 5-amino-1-(5-phospho-D-ribosyl)imidazole from N(2)-formyl-N(1)-(5-phospho-D-ribosyl)glycinamide: step 1/2. In terms of biological role, part of the phosphoribosylformylglycinamidine synthase complex involved in the purines biosynthetic pathway. Catalyzes the ATP-dependent conversion of formylglycinamide ribonucleotide (FGAR) and glutamine to yield formylglycinamidine ribonucleotide (FGAM) and glutamate. The FGAM synthase complex is composed of three subunits. PurQ produces an ammonia molecule by converting glutamine to glutamate. PurL transfers the ammonia molecule to FGAR to form FGAM in an ATP-dependent manner. PurS interacts with PurQ and PurL and is thought to assist in the transfer of the ammonia molecule from PurQ to PurL. The chain is Phosphoribosylformylglycinamidine synthase subunit PurQ from Pseudothermotoga lettingae (strain ATCC BAA-301 / DSM 14385 / NBRC 107922 / TMO) (Thermotoga lettingae).